A 784-amino-acid chain; its full sequence is Cell wall protein Lmo0130 (784 aa).

A signal peptide spans 1–34; sequence MKVNKFFKKTTHVLLVAGLTIGLTAPFTGTTAQA. Positions 690 to 761 are disordered; it reads ATTPPDNGNG…NTSLPTTGDT (72 aa). A compositionally biased stretch (gly residues) spans 697-729; it reads GNGGTDNGNGNGNNGGTDGNGGTNNGNGSGTNG. Positions 730 to 759 are enriched in low complexity; sequence GTTTTEDPTTTTSNTSTTGTSSNTSLPTTG. Positions 755–759 match the LPXTG sorting signal motif; it reads LPTTG. A Pentaglycyl murein peptidoglycan amidated threonine modification is found at Thr758. A propeptide spans 759 to 784 (removed by sortase A); it reads GDTAGLATVFGVILTTTALYVLRKRS.

It localises to the secreted. Its subcellular location is the cell wall. In Listeria monocytogenes serovar 1/2a (strain ATCC BAA-679 / EGD-e), this protein is Cell wall protein Lmo0130.